A 282-amino-acid chain; its full sequence is Formate channel FocB (282 aa).

Topologically, residues 1–35 are cytoplasmic; the sequence is MRNKLSFDLQLSARKAAIAERIAAHKIARSKVSVF. The chain crosses the membrane as a helical span at residues 36–56; sequence LMAMSAGVFMAIGFTFYLSVI. Residues 57–68 lie on the Periplasmic side of the membrane; that stretch reads ADAPSSQALTHL. The helical transmembrane segment at 69–89 threads the bilayer; that stretch reads VGGLCFTLGFILLAVCGTSLF. Residues 90-112 are Cytoplasmic-facing; it reads TSSVMTVMAKSRGVISWRTWLIN. The chain crosses the membrane as a helical span at residues 113 to 133; that stretch reads ALLVACGNLAGIACFSLLIWF. Topologically, residues 134 to 163 are periplasmic; sequence SGLVMSENAMWGVAVLHCAEGKMHHTFTES. Residues 164-184 form a helical membrane-spanning segment; sequence VSLGIMCNLMVCLALWMSYCG. At 185 to 190 the chain is on the cytoplasmic side; that stretch reads RSLCDK. A helical transmembrane segment spans residues 191-211; sequence IVAMILPITLFVASGFEHCIA. The Periplasmic segment spans residues 212–248; sequence NLFVIPFAIAIRHFAPPPFWQLAHSSADNFPALTVSH. A helical membrane pass occupies residues 249–269; sequence FITANLLPVMLGNIIGGAVLV. Over 270–282 the chain is Cytoplasmic; it reads SMCYRAIYLRQEP.

The protein belongs to the FNT transporter (TC 1.A.16) family.

The protein resides in the cell inner membrane. The catalysed reaction is formate(in) = formate(out). The direction of formate translocation depends on external pH and electron donor source. In terms of biological role, involved in the bidirectional transport of formate during mixed-acid fermentation. This is Formate channel FocB from Escherichia coli (strain K12).